The chain runs to 570 residues: Probable metalloreductase AIM14 (570 aa).

7 helical membrane-spanning segments follow: residues 21 to 41, 70 to 90, 101 to 118, 142 to 162, 177 to 197, 204 to 224, and 230 to 250; these read IKYG…LALL, AIHL…HYSL, LGRL…LTLR, IITV…AIDD, FVGF…IGPM, LFYI…PIHS, and FPFL…RIVF. The region spanning 101-219 is the Ferric oxidoreductase domain; it reads LGRLSYALIP…NLVNVAFILL (119 aa). The 139-residue stretch at 250–388 folds into the FAD-binding FR-type domain; the sequence is FAKSLMILNK…GGSGISFALP (139 aa). Residues 481–505 show a composition bias toward polar residues; it reads SNFNSENADSNDNTPETSHSPTKEN. Positions 481–507 are disordered; it reads SNFNSENADSNDNTPETSHSPTKENGS.

Belongs to the ferric reductase (FRE) family. AIM14 subfamily. As to quaternary structure, interacts with ribosomes.

It is found in the membrane. Its function is as follows. Probable cell surface metalloreductase. May be involved in iron or copper homeostasis. The chain is Probable metalloreductase AIM14 (AIM14) from Saccharomyces cerevisiae (strain YJM789) (Baker's yeast).